The chain runs to 345 residues: Anthranilate phosphoribosyltransferase (345 aa).

5-phospho-alpha-D-ribose 1-diphosphate contacts are provided by residues Gly-84, 87–88 (GD), Thr-92, 94–97 (NIST), 112–120 (KHGNRSVSS), and Ser-124. Gly-84 is a binding site for anthranilate. Residue Ser-96 coordinates Mg(2+). Asn-115 contributes to the anthranilate binding site. Residue Arg-170 participates in anthranilate binding. Residues Asp-229 and Glu-230 each contribute to the Mg(2+) site.

The protein belongs to the anthranilate phosphoribosyltransferase family. In terms of assembly, homodimer. Mg(2+) serves as cofactor.

The enzyme catalyses N-(5-phospho-beta-D-ribosyl)anthranilate + diphosphate = 5-phospho-alpha-D-ribose 1-diphosphate + anthranilate. It participates in amino-acid biosynthesis; L-tryptophan biosynthesis; L-tryptophan from chorismate: step 2/5. Functionally, catalyzes the transfer of the phosphoribosyl group of 5-phosphorylribose-1-pyrophosphate (PRPP) to anthranilate to yield N-(5'-phosphoribosyl)-anthranilate (PRA). This chain is Anthranilate phosphoribosyltransferase, found in Xanthomonas campestris pv. campestris (strain B100).